A 363-amino-acid polypeptide reads, in one-letter code: Flagellar P-ring protein (363 aa).

An N-terminal signal peptide occupies residues 1–20 (MKKFTLLLLCFVLPMTSAYA).

Belongs to the FlgI family. In terms of assembly, the basal body constitutes a major portion of the flagellar organelle and consists of four rings (L,P,S, and M) mounted on a central rod.

It is found in the periplasm. The protein localises to the bacterial flagellum basal body. Assembles around the rod to form the L-ring and probably protects the motor/basal body from shearing forces during rotation. This chain is Flagellar P-ring protein, found in Vibrio vulnificus (strain YJ016).